We begin with the raw amino-acid sequence, 130 residues long: L-ectoine synthase (130 aa).

This sequence belongs to the ectoine synthase family.

The enzyme catalyses (2S)-4-acetamido-2-aminobutanoate = L-ectoine + H2O. It functions in the pathway amine and polyamine biosynthesis; ectoine biosynthesis; L-ectoine from L-aspartate 4-semialdehyde: step 3/3. Catalyzes the circularization of gamma-N-acetyl-alpha,gamma-diaminobutyric acid (ADABA) to ectoine (1,4,5,6-tetrahydro-2-methyl-4-pyrimidine carboxylic acid), which is an excellent osmoprotectant. This Desulfatibacillum aliphaticivorans protein is L-ectoine synthase.